The sequence spans 182 residues: ATP synthase subunit delta (182 aa).

Belongs to the ATPase delta chain family. F-type ATPases have 2 components, F(1) - the catalytic core - and F(0) - the membrane proton channel. F(1) has five subunits: alpha(3), beta(3), gamma(1), delta(1), epsilon(1). F(0) has three main subunits: a(1), b(2) and c(10-14). The alpha and beta chains form an alternating ring which encloses part of the gamma chain. F(1) is attached to F(0) by a central stalk formed by the gamma and epsilon chains, while a peripheral stalk is formed by the delta and b chains.

Its subcellular location is the cell membrane. F(1)F(0) ATP synthase produces ATP from ADP in the presence of a proton or sodium gradient. F-type ATPases consist of two structural domains, F(1) containing the extramembraneous catalytic core and F(0) containing the membrane proton channel, linked together by a central stalk and a peripheral stalk. During catalysis, ATP synthesis in the catalytic domain of F(1) is coupled via a rotary mechanism of the central stalk subunits to proton translocation. In terms of biological role, this protein is part of the stalk that links CF(0) to CF(1). It either transmits conformational changes from CF(0) to CF(1) or is implicated in proton conduction. The polypeptide is ATP synthase subunit delta (Alkalihalophilus pseudofirmus (strain ATCC BAA-2126 / JCM 17055 / OF4) (Bacillus pseudofirmus)).